Reading from the N-terminus, the 1607-residue chain is Phosphatidylinositol 3-kinase piki-1 (1607 aa).

The region spanning 2–21 (SDDEELQLAIEISKKTFKDE) is the UIM domain. 3 disordered regions span residues 54–91 (EANSPGPSSYSGSLATSPIDFRPVYNEPRAGPIPHSQS), 105–128 (STSQPPAFPPPPRPPKPEQYKFPP), and 142–182 (PPPP…SFAS). Over residues 58 to 69 (PGPSSYSGSLAT) the composition is skewed to polar residues. The span at 158–169 (PPVPIHPTPPVS) shows a compositional bias: pro residues. In terms of domain architecture, PI3K-RBD spans 362 to 453 (ASTVKVVVYK…GDDVKLDLGV (92 aa)). A C2 PI3K-type domain is found at 598-766 (KMDFLQIMLN…KIWDTEIYFP (169 aa)). In terms of domain architecture, PIK helical spans 776-953 (PQDFATLDIE…AIRCQNLQQK (178 aa)). A PI3K/PI4K catalytic domain is found at 1029–1303 (RIEECSVFNS…MIQNSLGSAF (275 aa)). A G-loop region spans residues 1035–1041 (VFNSNAK). Positions 1168 to 1176 (GIGDRHNDN) are catalytic loop. The segment at 1187–1213 (HIDFGKYMGDWQMAAGFRRDRVPFVFT) is activation loop. A PX domain is found at 1344-1458 (GRISRVTVLK…TFFHSILRDN (115 aa)). Residues 1472–1601 (SQCQIYLKIE…KNCRTLEGWF (130 aa)) form the C2 domain.

This sequence belongs to the PI3/PI4-kinase family.

It localises to the cell projection. The protein localises to the phagocytic cup. It is found in the cytoplasmic vesicle. The protein resides in the phagosome membrane. Its subcellular location is the cytoplasm. The enzyme catalyses a 1,2-diacyl-sn-glycero-3-phospho-(1D-myo-inositol) + ATP = a 1,2-diacyl-sn-glycero-3-phospho-(1D-myo-inositol-3-phosphate) + ADP + H(+). Its function is as follows. Phosphatidylinositol 3-kinase involved in clearance of apoptotic cell corpses by phagosomes. Phagosome maturation requires two sequential and non-overlapping pulses of phosphatidylinositol-3-phosphate (PI3P) on the vesicle surface which mediates recruitment of sortins snx-1 and lst-4 and small GTPases rab-5, rab-2 and rab-7. The first pulse is initiated by piki-1, then maintained by vps-34 which also produces the second pulse. Unlike vps-34, not involved in the formation of PI3P in early endosomes. This Caenorhabditis elegans protein is Phosphatidylinositol 3-kinase piki-1.